The chain runs to 572 residues: Proline--tRNA ligase (572 aa).

This sequence belongs to the class-II aminoacyl-tRNA synthetase family. ProS type 1 subfamily. In terms of assembly, homodimer.

The protein localises to the cytoplasm. It catalyses the reaction tRNA(Pro) + L-proline + ATP = L-prolyl-tRNA(Pro) + AMP + diphosphate. Catalyzes the attachment of proline to tRNA(Pro) in a two-step reaction: proline is first activated by ATP to form Pro-AMP and then transferred to the acceptor end of tRNA(Pro). As ProRS can inadvertently accommodate and process non-cognate amino acids such as alanine and cysteine, to avoid such errors it has two additional distinct editing activities against alanine. One activity is designated as 'pretransfer' editing and involves the tRNA(Pro)-independent hydrolysis of activated Ala-AMP. The other activity is designated 'posttransfer' editing and involves deacylation of mischarged Ala-tRNA(Pro). The misacylated Cys-tRNA(Pro) is not edited by ProRS. The polypeptide is Proline--tRNA ligase (Enterobacter sp. (strain 638)).